The primary structure comprises 271 residues: Formamidopyrimidine-DNA glycosylase (271 aa).

The active-site Schiff-base intermediate with DNA is Pro2. Glu3 (proton donor) is an active-site residue. Lys57 (proton donor; for beta-elimination activity) is an active-site residue. DNA contacts are provided by His90, Arg109, and Lys151. The segment at 236 to 270 (HVYGRGGETCTSCGNLLSEIRLGQRTTVFCGICQT) adopts an FPG-type zinc-finger fold. Catalysis depends on Arg260, which acts as the Proton donor; for delta-elimination activity.

This sequence belongs to the FPG family. As to quaternary structure, monomer. Requires Zn(2+) as cofactor.

It catalyses the reaction Hydrolysis of DNA containing ring-opened 7-methylguanine residues, releasing 2,6-diamino-4-hydroxy-5-(N-methyl)formamidopyrimidine.. It carries out the reaction 2'-deoxyribonucleotide-(2'-deoxyribose 5'-phosphate)-2'-deoxyribonucleotide-DNA = a 3'-end 2'-deoxyribonucleotide-(2,3-dehydro-2,3-deoxyribose 5'-phosphate)-DNA + a 5'-end 5'-phospho-2'-deoxyribonucleoside-DNA + H(+). In terms of biological role, involved in base excision repair of DNA damaged by oxidation or by mutagenic agents. Acts as a DNA glycosylase that recognizes and removes damaged bases. Has a preference for oxidized purines, such as 7,8-dihydro-8-oxoguanine (8-oxoG). Has AP (apurinic/apyrimidinic) lyase activity and introduces nicks in the DNA strand. Cleaves the DNA backbone by beta-delta elimination to generate a single-strand break at the site of the removed base with both 3'- and 5'-phosphates. In Shewanella sp. (strain W3-18-1), this protein is Formamidopyrimidine-DNA glycosylase.